The chain runs to 231 residues: NADH-ubiquinone oxidoreductase chain 4 (231 aa).

6 helical membrane passes run Pro1–Ile21, Met34–Leu54, Leu62–Trp84, Ala89–Tyr111, Ile128–Pro148, and Thr169–Leu189.

The protein belongs to the complex I subunit 4 family.

The protein resides in the mitochondrion membrane. It carries out the reaction a ubiquinone + NADH + 5 H(+)(in) = a ubiquinol + NAD(+) + 4 H(+)(out). Functionally, core subunit of the mitochondrial membrane respiratory chain NADH dehydrogenase (Complex I) that is believed to belong to the minimal assembly required for catalysis. Complex I functions in the transfer of electrons from NADH to the respiratory chain. The immediate electron acceptor for the enzyme is believed to be ubiquinone. The chain is NADH-ubiquinone oxidoreductase chain 4 (MT-ND4) from Bothrops erythromelas (Caatinga lance head).